Reading from the N-terminus, the 112-residue chain is Nitrogen regulatory protein P-II (112 aa).

Tyr51 is subject to O-UMP-tyrosine.

It belongs to the P(II) protein family. In terms of assembly, homotrimer. In terms of processing, uridylylated/deuridylylated by GlnD.

P-II indirectly controls the transcription of the glutamine synthetase gene (GlnA). P-II prevents NR-II-catalyzed conversion of NR-I to NR-I-phosphate, the transcriptional activator of GlnA. When P-II is uridylylated to P-II-UMP, these events are reversed. When the ratio of Gln to 2-ketoglutarate decreases, P-II is uridylylated to P-II-UMP, which causes the deadenylation of glutamine synthetase by GlnE, so activating the enzyme. This chain is Nitrogen regulatory protein P-II (glnB), found in Haemophilus influenzae (strain ATCC 51907 / DSM 11121 / KW20 / Rd).